Here is a 166-residue protein sequence, read N- to C-terminus: Ribosome maturation factor RimM (166 aa).

The region spanning 91–165 (DDEFYHADLI…RIVADPPEGL (75 aa)) is the PRC barrel domain.

It belongs to the RimM family. In terms of assembly, binds ribosomal protein uS19.

The protein localises to the cytoplasm. Its function is as follows. An accessory protein needed during the final step in the assembly of 30S ribosomal subunit, possibly for assembly of the head region. Essential for efficient processing of 16S rRNA. May be needed both before and after RbfA during the maturation of 16S rRNA. It has affinity for free ribosomal 30S subunits but not for 70S ribosomes. The sequence is that of Ribosome maturation factor RimM from Dinoroseobacter shibae (strain DSM 16493 / NCIMB 14021 / DFL 12).